Consider the following 366-residue polypeptide: MGEQPIFSTRAHVFQIDPNTKKNWVPTSKHAVTVSYFYDSTRNVYRIISLDGSKAIINSTITPNMTFTKTSQKFGQWADSRANTVYGLGFSSEHHLSKFAEKFQEFKEAARLAKEKSQEKMELTSTPSQESAGGDLQSPLTPESINGTDDERTPDVTQNSEPRAEPTQNALPFPHSAGDRTQALSHASSAISKHWEAELATLKGNNAKLTAALLESTANVKQWKQQLAAYQEEAERLHKRVTELECVSSQANAVHSHKTELNQTVQELEETLKVKEEEIERLKQEIDNARELQEQRDSLTQKLQEVEIRNKDLEGQLSDLEQRLEKSQNEQEAFRSNLKTLLEILDGKIFELTELRDNLAKLLECS.

Gly2 is subject to N-acetylglycine. The region spanning 2 to 110 (GEQPIFSTRA…EKFQEFKEAA (109 aa)) is the WH1 domain. A disordered region spans residues 114–189 (KEKSQEKMEL…RTQALSHASS (76 aa)). Composition is skewed to polar residues over residues 138–147 (SPLTPESING) and 155–170 (DVTQ…TQNA). Residues 193 to 364 (KHWEAELATL…LRDNLAKLLE (172 aa)) adopt a coiled-coil conformation. Positions 302 to 366 (KLQEVEIRNK…DNLAKLLECS (65 aa)) are required for tetramerization. The residue at position 318 (Ser318) is a Phosphoserine.

It belongs to the Homer family. Tetramer; this tetrameric structure is critical for forming the high-order complex with SHANK1, which in turn is necessary for the structural and functional integrity of dendritic spines. Isoform 1, isoform 2 and isoform 3 encode a coiled-coil structure that mediates homo- and heteromultimerization. Interacts with GRM1, GRM5, ITPR1, DNM3, RYR1, RYR2 and SHANK3. Interacts with IFT57 and OPHN1. Interacts with SHANK1; forms high-order polymerized complex with a mesh-like network structure, at least composed of SHANK1, HOMER1 and DLGAP1; the complex formation is SHANK1 multimerization dependent. Interacts with NFATC4. Interacts with DAGLA (via PPXXF motif); this interaction is required for the cell membrane localization of DAGLA. Interacts with SRGAP2. Expressed in skeletal muscle at the level of the Z line, in the forebrain and cerebellum. In terms of tissue distribution, expressed in cardiac and skeletal muscle. As to expression, expressed in the hippocampus. Expressed in skeletal muscle at the level of the Z line, in the heart, forebrain and cerebellum.

It is found in the cytoplasm. Its subcellular location is the postsynaptic density. It localises to the synapse. The protein resides in the cell projection. The protein localises to the dendritic spine. Postsynaptic density scaffolding protein. Binds and cross-links cytoplasmic regions of GRM1, GRM5, ITPR1, DNM3, RYR1, RYR2, SHANK1 and SHANK3. By physically linking GRM1 and GRM5 with ER-associated ITPR1 receptors, it aids the coupling of surface receptors to intracellular calcium release. May also couple GRM1 to PI3 kinase through its interaction with AGAP2. Isoform 1 regulates the trafficking and surface expression of GRM5. Differentially regulates the functions of the calcium activated channel ryanodine receptors RYR1 and RYR2. Isoform 1 decreases the activity of RYR2, and increases the activity of RYR1, whereas isoform 5 counteracts the effects by competing for binding sites. Isoform 3 regulates the trafficking and surface expression of GRM5. Isoform 5 acts as a natural dominant negative, in dynamic competition with constitutively expressed isoform 1, isoform 2 and isoform 3 to regulate synaptic metabotropic glutamate function. Isoform 5, may be involved in the structural changes that occur at synapses during long-lasting neuronal plasticity and development. Forms a high-order complex with SHANK1, which in turn is necessary for the structural and functional integrity of dendritic spines. Negatively regulates T cell activation by inhibiting the calcineurin-NFAT pathway. Acts by competing with calcineurin/PPP3CA for NFAT protein binding, hence preventing NFAT activation by PPP3CA. The sequence is that of Homer protein homolog 1 from Mus musculus (Mouse).